A 304-amino-acid polypeptide reads, in one-letter code: Homoserine O-acetyltransferase (304 aa).

Residue Cys142 is the Acyl-thioester intermediate of the active site. The substrate site is built by Lys163 and Ser191. The active-site Proton acceptor is the His234. Residue Glu236 is part of the active site. Residue Arg248 participates in substrate binding.

The protein belongs to the MetA family.

The protein localises to the cytoplasm. The enzyme catalyses L-homoserine + acetyl-CoA = O-acetyl-L-homoserine + CoA. The protein operates within amino-acid biosynthesis; L-methionine biosynthesis via de novo pathway; O-acetyl-L-homoserine from L-homoserine: step 1/1. Functionally, transfers an acetyl group from acetyl-CoA to L-homoserine, forming acetyl-L-homoserine. This Thermotoga petrophila (strain ATCC BAA-488 / DSM 13995 / JCM 10881 / RKU-1) protein is Homoserine O-acetyltransferase.